Consider the following 434-residue polypeptide: Protein translocase subunit SecY (434 aa).

Transmembrane regions (helical) follow at residues 19 to 39 (LFTL…IPGI), 73 to 93 (IFML…LLVY), 117 to 137 (YLTI…AKGI), 148 to 168 (YIFV…WFGE), 179 to 199 (TSLI…FNLF), 209 to 229 (VNPV…ILII), 264 to 284 (VLPV…LSGF), 300 to 320 (PNGF…TYFY), 362 to 382 (FSGS…QNIF), and 391 to 411 (IMGG…LIHI).

This sequence belongs to the SecY/SEC61-alpha family. Component of the Sec protein translocase complex. Heterotrimer consisting of SecY, SecE and SecG subunits. The heterotrimers can form oligomers, although 1 heterotrimer is thought to be able to translocate proteins. Interacts with the ribosome. Interacts with SecDF, and other proteins may be involved. Interacts with SecA.

The protein localises to the cell inner membrane. Functionally, the central subunit of the protein translocation channel SecYEG. Consists of two halves formed by TMs 1-5 and 6-10. These two domains form a lateral gate at the front which open onto the bilayer between TMs 2 and 7, and are clamped together by SecE at the back. The channel is closed by both a pore ring composed of hydrophobic SecY resides and a short helix (helix 2A) on the extracellular side of the membrane which forms a plug. The plug probably moves laterally to allow the channel to open. The ring and the pore may move independently. This is Protein translocase subunit SecY from Borreliella burgdorferi (strain ATCC 35210 / DSM 4680 / CIP 102532 / B31) (Borrelia burgdorferi).